Reading from the N-terminus, the 1106-residue chain is Carbamoyl phosphate synthase large chain (1106 aa).

Residues 1 to 401 (MPKRNDLNKV…AFLKALRSLE (401 aa)) are carboxyphosphate synthetic domain. Residues R129, R169, G175, G176, R208, V210, E215, G241, V242, H243, Q284, and E298 each contribute to the ATP site. One can recognise an ATP-grasp 1 domain in the interval 133-327 (KTTMNDIGEP…IARVASKIAI (195 aa)). Mg(2+) is bound by residues Q284, E298, and N300. Positions 284, 298, and 300 each coordinate Mn(2+). Residues 402–577 (IDLDDLHQSI…YSAYNEENEA (176 aa)) form an oligomerization domain region. Residues 578 to 964 (IPPSEPTHDK…ALYKAMLASG (387 aa)) are carbamoyl phosphate synthetic domain. The ATP-grasp 2 domain occupies 706-896 (DQLLNKLGID…MVKIATKAMM (191 aa)). 10 residues coordinate ATP: R742, Q781, L783, E787, G812, V813, H814, S815, Q855, and E867. Residues Q855, E867, and N869 each contribute to the Mg(2+) site. Residues Q855, E867, and N869 each contribute to the Mn(2+) site. The MGS-like domain maps to 965 to 1106 (FSINLNGGVL…LQDYLKELSN (142 aa)). The allosteric domain stretch occupies residues 965 to 1106 (FSINLNGGVL…LQDYLKELSN (142 aa)).

It belongs to the CarB family. As to quaternary structure, composed of two chains; the small (or glutamine) chain promotes the hydrolysis of glutamine to ammonia, which is used by the large (or ammonia) chain to synthesize carbamoyl phosphate. Tetramer of heterodimers (alpha,beta)4. The cofactor is Mg(2+). Mn(2+) serves as cofactor.

It carries out the reaction hydrogencarbonate + L-glutamine + 2 ATP + H2O = carbamoyl phosphate + L-glutamate + 2 ADP + phosphate + 2 H(+). The catalysed reaction is hydrogencarbonate + NH4(+) + 2 ATP = carbamoyl phosphate + 2 ADP + phosphate + 2 H(+). It participates in amino-acid biosynthesis; L-arginine biosynthesis; carbamoyl phosphate from bicarbonate: step 1/1. The protein operates within pyrimidine metabolism; UMP biosynthesis via de novo pathway; (S)-dihydroorotate from bicarbonate: step 1/3. In terms of biological role, large subunit of the glutamine-dependent carbamoyl phosphate synthetase (CPSase). CPSase catalyzes the formation of carbamoyl phosphate from the ammonia moiety of glutamine, carbonate, and phosphate donated by ATP, constituting the first step of 2 biosynthetic pathways, one leading to arginine and/or urea and the other to pyrimidine nucleotides. The large subunit (synthetase) binds the substrates ammonia (free or transferred from glutamine from the small subunit), hydrogencarbonate and ATP and carries out an ATP-coupled ligase reaction, activating hydrogencarbonate by forming carboxy phosphate which reacts with ammonia to form carbamoyl phosphate. This Natranaerobius thermophilus (strain ATCC BAA-1301 / DSM 18059 / JW/NM-WN-LF) protein is Carbamoyl phosphate synthase large chain.